The following is a 454-amino-acid chain: Adenylosuccinate synthetase isozyme 1 B (454 aa).

Residues 1-24 (MSGTRASNDRSSHPGAGGHKRPRY) are disordered. Residues 39–45 (GDEGKGK) and 67–69 (GHT) each bind GTP. Catalysis depends on D40, which acts as the Proton acceptor. Mg(2+) contacts are provided by D40 and G67. Position 40 (D40) interacts with substrate. Residues 40–43 (DEGK), 65–68 (NAGH), T160, R174, N253, T268, and R332 contribute to the IMP site. The Proton donor role is filled by H68. A substrate-binding site is contributed by 328–334 (VTTGRKR). Residues R334, 360-362 (KLD), and 442-445 (GVGK) each bind GTP.

It belongs to the adenylosuccinate synthetase family. Homodimer. Mg(2+) is required as a cofactor.

It is found in the cytoplasm. The catalysed reaction is IMP + L-aspartate + GTP = N(6)-(1,2-dicarboxyethyl)-AMP + GDP + phosphate + 2 H(+). The protein operates within purine metabolism; AMP biosynthesis via de novo pathway; AMP from IMP: step 1/2. Component of the purine nucleotide cycle (PNC), which interconverts IMP and AMP to regulate the nucleotide levels in various tissues, and which contributes to glycolysis and ammoniagenesis. Catalyzes the first committed step in the biosynthesis of AMP from IMP. In Xenopus laevis (African clawed frog), this protein is Adenylosuccinate synthetase isozyme 1 B (adss1-b).